Consider the following 104-residue polypeptide: uncharacterized protein (104 aa).

It is found in the mitochondrion. This is an uncharacterized protein from Claviceps purpurea (Ergot fungus).